A 340-amino-acid chain; its full sequence is Biotin synthase (340 aa).

The region spanning 45–272 is the Radical SAM core domain; that stretch reads NAVQVSTLLS…ASYVRLSAGR (228 aa). The [4Fe-4S] cluster site is built by Cys60, Cys64, and Cys67. Residues Cys104, Cys135, Cys195, and Arg267 each contribute to the [2Fe-2S] cluster site.

The protein belongs to the radical SAM superfamily. Biotin synthase family. As to quaternary structure, homodimer. The cofactor is [4Fe-4S] cluster. [2Fe-2S] cluster is required as a cofactor.

It carries out the reaction (4R,5S)-dethiobiotin + (sulfur carrier)-SH + 2 reduced [2Fe-2S]-[ferredoxin] + 2 S-adenosyl-L-methionine = (sulfur carrier)-H + biotin + 2 5'-deoxyadenosine + 2 L-methionine + 2 oxidized [2Fe-2S]-[ferredoxin]. Its pathway is cofactor biosynthesis; biotin biosynthesis; biotin from 7,8-diaminononanoate: step 2/2. Catalyzes the conversion of dethiobiotin (DTB) to biotin by the insertion of a sulfur atom into dethiobiotin via a radical-based mechanism. The polypeptide is Biotin synthase (Thioalkalivibrio sulfidiphilus (strain HL-EbGR7)).